The primary structure comprises 138 residues: Acidic phospholipase A2 VpaPLA2 (138 aa).

Residues 1–16 (MRTLWIVAVCLMGVEG) form the signal peptide. Cystine bridges form between cysteine 42–cysteine 131, cysteine 44–cysteine 60, cysteine 59–cysteine 111, cysteine 65–cysteine 138, cysteine 66–cysteine 104, cysteine 73–cysteine 97, and cysteine 91–cysteine 102. Positions 43, 45, and 47 each coordinate Ca(2+). The active site involves histidine 63. A Ca(2+)-binding site is contributed by aspartate 64. The active site involves aspartate 105.

Belongs to the phospholipase A2 family. Group II subfamily. D49 sub-subfamily. Requires Ca(2+) as cofactor. Expressed by the venom gland.

It localises to the secreted. It catalyses the reaction a 1,2-diacyl-sn-glycero-3-phosphocholine + H2O = a 1-acyl-sn-glycero-3-phosphocholine + a fatty acid + H(+). Snake venom phospholipase A2 (PLA2) that causes a sudden decrease of arterial blood pressure when injected into rat, but is not lethal. When co-injected with an uncharacterized basic protein (which did not show any enzymatic activity, but also causes a drop in blood pressure), this synergistical mixture is lethal. PLA2 catalyzes the calcium-dependent hydrolysis of the 2-acyl groups in 3-sn-phosphoglycerides. This Daboia palaestinae (Palestine viper) protein is Acidic phospholipase A2 VpaPLA2.